A 399-amino-acid polypeptide reads, in one-letter code: Phosphoglycerate kinase (399 aa).

Substrate is bound by residues 22–24 (DLN), Arg37, 60–63 (HFGR), Arg119, and Arg152. ATP-binding positions include Lys202, Glu324, and 354 to 357 (GGDT).

This sequence belongs to the phosphoglycerate kinase family. Monomer.

It localises to the cytoplasm. The enzyme catalyses (2R)-3-phosphoglycerate + ATP = (2R)-3-phospho-glyceroyl phosphate + ADP. The protein operates within carbohydrate degradation; glycolysis; pyruvate from D-glyceraldehyde 3-phosphate: step 2/5. This Rhizobium meliloti (strain 1021) (Ensifer meliloti) protein is Phosphoglycerate kinase.